A 495-amino-acid chain; its full sequence is Regulator of G-protein signaling 7 (495 aa).

Positions 37 to 112 (EKNGIPIRTV…DDGTFYRFQT (76 aa)) constitute a DEP domain. Phosphoserine occurs at positions 229 and 241. The segment at 235-256 (NDIRSHSPTHTPTPETKPPTED) is disordered. T243 carries the phosphothreonine modification. One can recognise a G protein gamma domain in the interval 255 to 316 (EDELQQQIKY…LSDDTTFWEL (62 aa)). An RGS domain is found at 333–448 (GMDEALKDPV…IRSSAYQELL (116 aa)). S434 is modified (phosphoserine).

Interacts with GNB5, forming the RGS7-GNB5 complex. Interacts with GPR158; promotes the GTPase activator activity of the RGS7-GNB5 complex in absence of glycine, in contrast GTPase activator activity of the RGS7-GNB5 complex is inhibited in presence of glycine. Interacts with GPR179. Interacts with PKD1; this prevents rapid proteasomal degradation. Interacts with RGS7BP, leading to regulate the subcellular location of the heterodimer formed with GNB5. Interacts (phosphorylated form) with 14-3-3 protein YWHAQ. Interacts with SNAPIN. Interacts with GNAI1. Interacts with GNAO1, GNAI3 and GNAZ. In terms of processing, palmitoylated. Ubiquitinated, leading to rapid proteasomal degradation. Post-translationally, phosphorylation and subsequent interaction with 14-3-3 proteins inhibits GAP activity.

It localises to the cytoplasm. Its subcellular location is the cytosol. The protein resides in the cell membrane. It is found in the membrane. GTPase activator component of the RGS7-GNB5 complex that regulates G protein-coupled receptor signaling cascades. The RGS7-GNB5 complex acts as an inhibitor signal transduction by promoting the GTPase activity of G protein alpha subunits, such as GNAO1, thereby driving them into their inactive GDP-bound form. May play a role in synaptic vesicle exocytosis. Glycine-dependent regulation of the RGS7-GNB5 complex by GPR158 affects mood and cognition via its ability to regulate neuronal excitability in L2/L3 pyramidal neurons of the prefrontal cortex. Modulates the activity of potassium channels that are activated by GNAO1 in response to muscarinic acetylcholine receptor M2/CHRM2 signaling. In Homo sapiens (Human), this protein is Regulator of G-protein signaling 7 (RGS7).